The sequence spans 309 residues: Ribonuclease Z (309 aa).

Zn(2+) is bound by residues H63, H65, D67, H68, H145, D216, and H274. Catalysis depends on D67, which acts as the Proton acceptor.

The protein belongs to the RNase Z family. Homodimer. Zn(2+) is required as a cofactor.

It catalyses the reaction Endonucleolytic cleavage of RNA, removing extra 3' nucleotides from tRNA precursor, generating 3' termini of tRNAs. A 3'-hydroxy group is left at the tRNA terminus and a 5'-phosphoryl group is left at the trailer molecule.. Zinc phosphodiesterase, which displays some tRNA 3'-processing endonuclease activity. Probably involved in tRNA maturation, by removing a 3'-trailer from precursor tRNA. This chain is Ribonuclease Z, found in Streptococcus thermophilus (strain CNRZ 1066).